A 418-amino-acid polypeptide reads, in one-letter code: MIHSLFLINCSGDIFLEKHWKSVVSQSVCDYFFEAQEKAADVENVPPVISTPHHYLISIYRDKLFFVSVIQTEVPPLFVIEFLHRVADTFQDYFGECSEAAIKDNVVIVYELLEEMLDNGFPLATESNILKELIKPPTILRSGVNSITGSSNVGDTLPTGQLSNIPWRRAGVKYTNNEAYFDVVEEIDAIIDKSGSTVFAEIQGVIDACIKLSGMPDLSLSFMNPRLLDDVSFHPCIRFKRWESERVLSFIPPDGNFRLISYRVSSQNLVAIPVYVKHSISFKENSSCGRFDITIGPKQNMGKTIEGITVTVHMPKVVLNMNLTPTQGSYTFDPVTKVLTWDVGKITPQKLPSLKGLVNLQSGAPKPEENPSLNIQFKIQQLAISGLKVNRLDMYGEKYKPFKGVKYVTKAGKFQVRT.

An MHD domain is found at 176 to 417 (NNEAYFDVVE…VTKAGKFQVR (242 aa)).

Belongs to the adaptor complexes medium subunit family. As to quaternary structure, adaptor protein complex 3 (AP-3) is a heterotetramer composed of two large adaptins (delta-type subunit AP3D1 and beta-type subunit AP3B1 or AP3B2), a medium adaptin (mu-type subunit AP3M1 or AP3M2) and a small adaptin (sigma-type subunit APS1 or AP3S2). Interacts with AGAP1. AP-3 associates with the BLOC-1 complex.

It is found in the golgi apparatus. It localises to the cytoplasmic vesicle membrane. Functionally, part of the AP-3 complex, an adaptor-related complex which is not clathrin-associated. The complex is associated with the Golgi region as well as more peripheral structures. It facilitates the budding of vesicles from the Golgi membrane and may be directly involved in trafficking to lysosomes. In concert with the BLOC-1 complex, AP-3 is required to target cargos into vesicles assembled at cell bodies for delivery into neurites and nerve terminals. The sequence is that of AP-3 complex subunit mu-1 (AP3M1) from Bos taurus (Bovine).